Consider the following 164-residue polypeptide: Kunitz-type proteinase inhibitor BbCI (164 aa).

Belongs to the protease inhibitor I3 (leguminous Kunitz-type inhibitor) family.

The protein resides in the secreted. Inhibits T.cruzi cruzipain. The polypeptide is Kunitz-type proteinase inhibitor BbCI (Bauhinia bauhinioides (Perlebia bauhinoides)).